A 223-amino-acid chain; its full sequence is NLP effector protein 3 (223 aa).

A Conserved undecapeptide motif motif is present at residues 90–100; that stretch reads AIMYVWYFPKD. A Conserved heptapeptide motif motif is present at residues 107–113; the sequence is GHRHDWE.

Belongs to the Necrosis inducing protein (NPP1) family.

The protein resides in the secreted. It localises to the host cytoplasm. In terms of biological role, probable secreted effector that may act as a pathogen-associated molecular pattern (PAMP) recognized by the plant immune system. Seems not to induce necrosis, neither in several susceptible or resistant Vitis species nor in the dicot model plant Nicotiana benthamiana. This chain is NLP effector protein 3, found in Plasmopara viticola (Downy mildew of grapevine).